A 377-amino-acid polypeptide reads, in one-letter code: 3-dehydroquinate synthase (377 aa).

Residues 115–119 (GVIGD), 139–140 (TS), K152, and K161 each bind NAD(+). Residues E194, H256, and H275 each contribute to the Zn(2+) site.

It belongs to the sugar phosphate cyclases superfamily. Dehydroquinate synthase family. NAD(+) is required as a cofactor. Co(2+) serves as cofactor. Requires Zn(2+) as cofactor.

The protein resides in the cytoplasm. The catalysed reaction is 7-phospho-2-dehydro-3-deoxy-D-arabino-heptonate = 3-dehydroquinate + phosphate. The protein operates within metabolic intermediate biosynthesis; chorismate biosynthesis; chorismate from D-erythrose 4-phosphate and phosphoenolpyruvate: step 2/7. Catalyzes the conversion of 3-deoxy-D-arabino-heptulosonate 7-phosphate (DAHP) to dehydroquinate (DHQ). In Agrobacterium fabrum (strain C58 / ATCC 33970) (Agrobacterium tumefaciens (strain C58)), this protein is 3-dehydroquinate synthase.